Here is a 421-residue protein sequence, read N- to C-terminus: Enolase (421 aa).

Residue Q161 coordinates (2R)-2-phosphoglycerate. E203 acts as the Proton donor in catalysis. The Mg(2+) site is built by D240, E283, and D310. Positions 335, 364, 365, and 386 each coordinate (2R)-2-phosphoglycerate. Residue K335 is the Proton acceptor of the active site.

This sequence belongs to the enolase family. It depends on Mg(2+) as a cofactor.

The protein resides in the cytoplasm. It is found in the secreted. Its subcellular location is the cell surface. It carries out the reaction (2R)-2-phosphoglycerate = phosphoenolpyruvate + H2O. It functions in the pathway carbohydrate degradation; glycolysis; pyruvate from D-glyceraldehyde 3-phosphate: step 4/5. In terms of biological role, catalyzes the reversible conversion of 2-phosphoglycerate (2-PG) into phosphoenolpyruvate (PEP). It is essential for the degradation of carbohydrates via glycolysis. This is Enolase from Sulfurimonas denitrificans (strain ATCC 33889 / DSM 1251) (Thiomicrospira denitrificans (strain ATCC 33889 / DSM 1251)).